The primary structure comprises 187 residues: Elongation factor P (187 aa).

This sequence belongs to the elongation factor P family.

The protein resides in the cytoplasm. The protein operates within protein biosynthesis; polypeptide chain elongation. Its function is as follows. Involved in peptide bond synthesis. Stimulates efficient translation and peptide-bond synthesis on native or reconstituted 70S ribosomes in vitro. Probably functions indirectly by altering the affinity of the ribosome for aminoacyl-tRNA, thus increasing their reactivity as acceptors for peptidyl transferase. The protein is Elongation factor P of Wolinella succinogenes (strain ATCC 29543 / DSM 1740 / CCUG 13145 / JCM 31913 / LMG 7466 / NCTC 11488 / FDC 602W) (Vibrio succinogenes).